The sequence spans 102 residues: Complement inhibitor RaCI6 (102 aa).

A signal peptide spans 1-24 (MAALNGLVLLLLTISAMFISECYS). Cystine bridges form between Cys37-Cys61 and Cys42-Cys63.

Belongs to the RaCI family. Expressed in salivary glands.

It is found in the secreted. In terms of biological role, complement inhibitor. Prevents complement-mediated C5 activation by binding to C5. Binds C5 at a different binding site than the other tick complement inhibitors OmCI and CirpT1, and the drug eculizumab. The chain is Complement inhibitor RaCI6 from Dermacentor andersoni (Rocky mountain wood tick).